We begin with the raw amino-acid sequence, 354 residues long: NADH-quinone oxidoreductase subunit H (354 aa).

8 helical membrane passes run 22-42, 91-111, 124-144, 168-188, 203-223, 255-275, 291-311, and 326-346; these read ILIRAVIIVVPLLLCVAYLIL, YLIAPLMVLMPAVAIWAVIPF, LLYVMAISSVGVYGVILAGWA, MGFALVTVLMVAGSLNLSAIV, ILSWNWLPLLPMFGVYFISGV, LFFLAEYINMIIISTMTALMF, IPGFFWLLIKVFLLLSVFIWI, and LGWKVFIPLTVAWLIIVAIWI.

The protein belongs to the complex I subunit 1 family. In terms of assembly, NDH-1 is composed of 14 different subunits. Subunits NuoA, H, J, K, L, M, N constitute the membrane sector of the complex.

The protein resides in the cell inner membrane. The enzyme catalyses a quinone + NADH + 5 H(+)(in) = a quinol + NAD(+) + 4 H(+)(out). In terms of biological role, NDH-1 shuttles electrons from NADH, via FMN and iron-sulfur (Fe-S) centers, to quinones in the respiratory chain. The immediate electron acceptor for the enzyme in this species is believed to be ubiquinone. Couples the redox reaction to proton translocation (for every two electrons transferred, four hydrogen ions are translocated across the cytoplasmic membrane), and thus conserves the redox energy in a proton gradient. This subunit may bind ubiquinone. This Cupriavidus taiwanensis (strain DSM 17343 / BCRC 17206 / CCUG 44338 / CIP 107171 / LMG 19424 / R1) (Ralstonia taiwanensis (strain LMG 19424)) protein is NADH-quinone oxidoreductase subunit H.